Consider the following 503-residue polypeptide: Cytochrome P450 3A12 (503 aa).

Heme is bound at residue Cys442.

It belongs to the cytochrome P450 family. The cofactor is heme.

The protein localises to the endoplasmic reticulum membrane. The protein resides in the microsome membrane. The enzyme catalyses an organic molecule + reduced [NADPH--hemoprotein reductase] + O2 = an alcohol + oxidized [NADPH--hemoprotein reductase] + H2O + H(+). Functionally, cytochromes P450 are a group of heme-thiolate monooxygenases. In liver microsomes, this enzyme is involved in an NADPH-dependent electron transport pathway. It oxidizes a variety of structurally unrelated compounds, including steroids, fatty acids, and xenobiotics. This Canis lupus familiaris (Dog) protein is Cytochrome P450 3A12 (CYP3A12).